The sequence spans 207 residues: Large ribosomal subunit protein uL3 (207 aa).

A disordered region spans residues 129–152; that stretch reads AGGPAGHGSRFQRHPGSIGSNTTP.

Belongs to the universal ribosomal protein uL3 family. In terms of assembly, part of the 50S ribosomal subunit. Forms a cluster with proteins L14 and L19.

Its function is as follows. One of the primary rRNA binding proteins, it binds directly near the 3'-end of the 23S rRNA, where it nucleates assembly of the 50S subunit. The sequence is that of Large ribosomal subunit protein uL3 from Leptospira biflexa serovar Patoc (strain Patoc 1 / ATCC 23582 / Paris).